The primary structure comprises 467 residues: Keratin, type 1 cytoskeletal 11 (467 aa).

The interval 1-100 is head; that stretch reads MSYSSFSIAQ…GGTDFLLGTS (100 aa). Positions 12–30 are enriched in low complexity; that stretch reads SRVPSLSGTRSSSSYSLKS. Residues 12-32 are disordered; that stretch reads SRVPSLSGTRSSSSYSLKSDL. The coil 1A stretch occupies residues 101–137; that stretch reads GKEAMQNLNDRLADYLARVRSLEDRNRELEQKIREWY. Residues 101–413 enclose the IF rod domain; sequence GKEAMQNLND…TLLEGDAGRS (313 aa). The segment at 138–156 is linker 1; it reads EKQGAGTKRKDFSHYFKII. A coil 1B region spans residues 157–248; that stretch reads ADLQNQINAG…SHDEDMKALR (92 aa). The tract at residues 249 to 268 is linker 12; the sequence is SQLGGQVNVEVDAAPAEDLT. Positions 269 to 416 are coil 2; sequence KKLEIIRQRY…EGDAGRSHSS (148 aa). The disordered stretch occupies residues 409-430; that stretch reads DAGRSHSSSHLSSTVSKDKVPV. The interval 417–463 is tail; that stretch reads SHLSSTVSKDKVPVSSPNVITKVRTIVEEKINGQVISKKEYEGSPDQ.

Belongs to the intermediate filament family. Heterotetramer of two type I and two type II keratins. In terms of tissue distribution, expressed in the outermost cell layers of skin epidermis (at protein level).

The sequence is that of Keratin, type 1 cytoskeletal 11 from Protopterus aethiopicus (Marbled lungfish).